The primary structure comprises 551 residues: RCC1 and BTB domain-containing protein 2 (551 aa).

6 RCC1 repeats span residues 64–115 (NDEI…VLAT), 117–169 (DGEV…VLTS), 171–222 (GEVF…AVVD), 223–274 (TGEV…VLTD), 276–326 (GQIY…AAKS), and 328–382 (GGHV…TVAE). The 64-residue stretch at 394-457 (ADLKFLVDGK…LYTDNISLPP (64 aa)) folds into the BTB domain.

The protein resides in the cytoplasmic vesicle. Its subcellular location is the secretory vesicle. It localises to the acrosome. The chain is RCC1 and BTB domain-containing protein 2 (Rcbtb2) from Rattus norvegicus (Rat).